Consider the following 318-residue polypeptide: Transaldolase (318 aa).

The active-site Schiff-base intermediate with substrate is K126.

It belongs to the transaldolase family. Type 1 subfamily. Homodimer.

The protein resides in the cytoplasm. It catalyses the reaction D-sedoheptulose 7-phosphate + D-glyceraldehyde 3-phosphate = D-erythrose 4-phosphate + beta-D-fructose 6-phosphate. It functions in the pathway carbohydrate degradation; pentose phosphate pathway; D-glyceraldehyde 3-phosphate and beta-D-fructose 6-phosphate from D-ribose 5-phosphate and D-xylulose 5-phosphate (non-oxidative stage): step 2/3. Its function is as follows. Transaldolase is important for the balance of metabolites in the pentose-phosphate pathway. The chain is Transaldolase from Variovorax paradoxus (strain S110).